The chain runs to 719 residues: DNA ligase (719 aa).

Residues 42 to 46 (DAAYD), 92 to 93 (SL), and glutamate 126 contribute to the NAD(+) site. Lysine 128 acts as the N6-AMP-lysine intermediate in catalysis. Arginine 149, glutamate 185, lysine 301, and lysine 325 together coordinate NAD(+). Residues cysteine 430, cysteine 433, cysteine 448, and cysteine 454 each coordinate Zn(2+). The region spanning 640–719 (ATGSPVEGKT…DDWFKLVGED (80 aa)) is the BRCT domain.

Belongs to the NAD-dependent DNA ligase family. LigA subfamily. It depends on Mg(2+) as a cofactor. Mn(2+) serves as cofactor.

The catalysed reaction is NAD(+) + (deoxyribonucleotide)n-3'-hydroxyl + 5'-phospho-(deoxyribonucleotide)m = (deoxyribonucleotide)n+m + AMP + beta-nicotinamide D-nucleotide.. In terms of biological role, DNA ligase that catalyzes the formation of phosphodiester linkages between 5'-phosphoryl and 3'-hydroxyl groups in double-stranded DNA using NAD as a coenzyme and as the energy source for the reaction. It is essential for DNA replication and repair of damaged DNA. The chain is DNA ligase from Brucella suis biovar 1 (strain 1330).